The following is a 231-amino-acid chain: Large ribosomal subunit protein uL1 (231 aa).

Belongs to the universal ribosomal protein uL1 family. In terms of assembly, part of the 50S ribosomal subunit.

In terms of biological role, binds directly to 23S rRNA. The L1 stalk is quite mobile in the ribosome, and is involved in E site tRNA release. Protein L1 is also a translational repressor protein, it controls the translation of the L11 operon by binding to its mRNA. The protein is Large ribosomal subunit protein uL1 of Ruthia magnifica subsp. Calyptogena magnifica.